Here is a 172-residue protein sequence, read N- to C-terminus: Methylated-DNA--protein-cysteine methyltransferase (172 aa).

Cys-142 acts as the Nucleophile; methyl group acceptor in catalysis.

It belongs to the MGMT family.

It is found in the cytoplasm. The enzyme catalyses a 6-O-methyl-2'-deoxyguanosine in DNA + L-cysteinyl-[protein] = S-methyl-L-cysteinyl-[protein] + a 2'-deoxyguanosine in DNA. It carries out the reaction a 4-O-methyl-thymidine in DNA + L-cysteinyl-[protein] = a thymidine in DNA + S-methyl-L-cysteinyl-[protein]. In terms of biological role, involved in the cellular defense against the biological effects of O6-methylguanine (O6-MeG) and O4-methylthymine (O4-MeT) in DNA. Repairs the methylated nucleobase in DNA by stoichiometrically transferring the methyl group to a cysteine residue in the enzyme. This is a suicide reaction: the enzyme is irreversibly inactivated. The sequence is that of Methylated-DNA--protein-cysteine methyltransferase from Pyrococcus horikoshii (strain ATCC 700860 / DSM 12428 / JCM 9974 / NBRC 100139 / OT-3).